The chain runs to 326 residues: DNA-directed RNA polymerase subunit alpha (326 aa).

Positions Met-1 to Glu-232 are alpha N-terminal domain (alpha-NTD). Residues Phe-246–Glu-326 are alpha C-terminal domain (alpha-CTD).

Belongs to the RNA polymerase alpha chain family. As to quaternary structure, homodimer. The RNAP catalytic core consists of 2 alpha, 1 beta, 1 beta' and 1 omega subunit. When a sigma factor is associated with the core the holoenzyme is formed, which can initiate transcription.

It carries out the reaction RNA(n) + a ribonucleoside 5'-triphosphate = RNA(n+1) + diphosphate. DNA-dependent RNA polymerase catalyzes the transcription of DNA into RNA using the four ribonucleoside triphosphates as substrates. The sequence is that of DNA-directed RNA polymerase subunit alpha from Ruthia magnifica subsp. Calyptogena magnifica.